Reading from the N-terminus, the 220-residue chain is Fructose-6-phosphate aldolase 2 (220 aa).

Catalysis depends on K85, which acts as the Schiff-base intermediate with substrate.

It belongs to the transaldolase family. Type 3A subfamily. Homodecamer.

It is found in the cytoplasm. It catalyses the reaction beta-D-fructose 6-phosphate = dihydroxyacetone + D-glyceraldehyde 3-phosphate. Functionally, catalyzes the reversible formation of fructose 6-phosphate from dihydroxyacetone and D-glyceraldehyde 3-phosphate via an aldolization reaction. Can utilize hydroxyacetone as an alternative donor substrate. Is also able to catalyze the direct self-aldol addition of glycolaldehyde. Is less catalytically efficient than the isozyme FsaA. Does not display transaldolase activity. The chain is Fructose-6-phosphate aldolase 2 (fsaB) from Escherichia coli (strain K12).